We begin with the raw amino-acid sequence, 143 residues long: Large ribosomal subunit protein uL11 (143 aa).

The protein belongs to the universal ribosomal protein uL11 family. Part of the ribosomal stalk of the 50S ribosomal subunit. Interacts with L10 and the large rRNA to form the base of the stalk. L10 forms an elongated spine to which L12 dimers bind in a sequential fashion forming a multimeric L10(L12)X complex. One or more lysine residues are methylated.

Functionally, forms part of the ribosomal stalk which helps the ribosome interact with GTP-bound translation factors. The chain is Large ribosomal subunit protein uL11 from Bifidobacterium longum (strain DJO10A).